The primary structure comprises 295 residues: Sulfotransferase 1 family member D1 (295 aa).

Position 48–53 (48–53 (KSGTTW)) interacts with 3'-phosphoadenylyl sulfate. Substrate-binding positions include F81 and 106–108 (KTH). The active-site Proton acceptor is the H108. Residues R130 and S138 each contribute to the 3'-phosphoadenylyl sulfate site. F142 contributes to the substrate binding site. 3'-phosphoadenylyl sulfate-binding positions include Y193, 227-232 (SSFSVM), and 257-259 (RKG).

This sequence belongs to the sulfotransferase 1 family. In terms of tissue distribution, detected in kidney and liver. Detected in kidney collecting duct cells.

The protein resides in the cytoplasm. Its function is as follows. Sulfotransferase with broad substrate specificity that utilizes 3'-phospho-5'-adenylyl sulfate (PAPS) as sulfonate donor to catalyze the sulfate conjugation of catecholamines, such as dopamine, prostaglandins, leukotriene E4, drugs and xenobiotic compounds. Has sulfotransferase activity towards p-nitrophenol, 2-naphthylamine and minoxidil (in vitro). Sulfonation increases the water solubility of most compounds, and therefore their renal excretion, but it can also result in bioactivation to form active metabolites. The chain is Sulfotransferase 1 family member D1 (Sult1d1) from Mus musculus (Mouse).